Here is an 81-residue protein sequence, read N- to C-terminus: Beta-catenin-interacting protein 1 (81 aa).

Serine 59 is modified (phosphoserine).

The protein belongs to the CTNNBIP1 family. In terms of assembly, binds CTNNB1.

Its subcellular location is the cytoplasm. It localises to the nucleus. Functionally, prevents the interaction between CTNNB1 and TCF family members, and acts as a negative regulator of the Wnt signaling pathway. In Bos taurus (Bovine), this protein is Beta-catenin-interacting protein 1 (CTNNBIP1).